The chain runs to 302 residues: RNA polymerase II holoenzyme cyclin-like subunit (302 aa).

The Cyclin N-terminal domain maps to 53–142 (QQLIKLGKRM…LGECEFSLIS (90 aa)).

Belongs to the cyclin family. Cyclin C subfamily. In terms of assembly, component of the srb8-11 complex, a regulatory module of the Mediator complex.

The protein localises to the nucleus. In terms of biological role, component of the srb8-11 complex. The srb8-11 complex is a regulatory module of the Mediator complex which is itself involved in regulation of basal and activated RNA polymerase II-dependent transcription. The srb8-11 complex may be involved in the transcriptional repression of a subset of genes regulated by Mediator. It may inhibit the association of the Mediator complex with RNA polymerase II to form the holoenzyme complex. The srb8-11 complex phosphorylates the C-terminal domain (CTD) of the largest subunit of RNA polymerase II. The chain is RNA polymerase II holoenzyme cyclin-like subunit (ssn8) from Aspergillus fumigatus (strain ATCC MYA-4609 / CBS 101355 / FGSC A1100 / Af293) (Neosartorya fumigata).